The sequence spans 26 residues: Muscarinic toxin-like protein 1 (26 aa).

This sequence belongs to the three-finger toxin family. Short-chain subfamily. Orphan group VIII (haditoxin) sub-subfamily. Homodimer; non-covalently linked. As to expression, expressed by the venom gland.

The protein localises to the secreted. In terms of biological role, antagonist of muscle and neuronal nicotinic acetylcholine receptors (nAChR) with highest affinity for neuronal alpha-7/CHRNA7 nAChRs. The sequence is that of Muscarinic toxin-like protein 1 from Naja naja (Indian cobra).